The sequence spans 399 residues: Aromatic-amino-acid aminotransferase (399 aa).

Substrate contacts are provided by Gly36, Tyr67, Trp132, and Asn184. Lys247 carries the post-translational modification N6-(pyridoxal phosphate)lysine. A substrate-binding site is contributed by Arg375.

Belongs to the class-I pyridoxal-phosphate-dependent aminotransferase family. Homodimer. Requires pyridoxal 5'-phosphate as cofactor.

The protein localises to the cytoplasm. It catalyses the reaction an aromatic L-alpha-amino acid + 2-oxoglutarate = an aromatic oxo-acid + L-glutamate. This is Aromatic-amino-acid aminotransferase (phhC) from Pseudomonas aeruginosa (strain ATCC 15692 / DSM 22644 / CIP 104116 / JCM 14847 / LMG 12228 / 1C / PRS 101 / PAO1).